The chain runs to 84 residues: Sec-independent protein translocase protein TatA (84 aa).

The helical transmembrane segment at 4 to 24 (MSPVHWLILAVVLLVVFGGGG) threads the bilayer. Positions 46–84 (DDESMTATDATQAPGHISPPNQNPGYSQTTSSETHRNQV) are disordered. The segment covering 64 to 77 (PPNQNPGYSQTTSS) has biased composition (polar residues).

This sequence belongs to the TatA/E family. In terms of assembly, the Tat system comprises two distinct complexes: a TatABC complex, containing multiple copies of TatA, TatB and TatC subunits, and a separate TatA complex, containing only TatA subunits. Substrates initially bind to the TatABC complex, which probably triggers association of the separate TatA complex to form the active translocon.

It localises to the cell inner membrane. Part of the twin-arginine translocation (Tat) system that transports large folded proteins containing a characteristic twin-arginine motif in their signal peptide across membranes. TatA could form the protein-conducting channel of the Tat system. In Gluconobacter oxydans (strain 621H) (Gluconobacter suboxydans), this protein is Sec-independent protein translocase protein TatA.